The primary structure comprises 294 residues: Movement protein (294 aa).

As to quaternary structure, interacts with nucleoprotein.

Transports viral genome to neighboring plant cells directly through plasmosdesmata, without any budding. The movement protein allows efficient cell to cell propagation, by bypassing the host cell wall barrier. Displays an RNA-binding activity. This chain is Movement protein (3), found in Rice yellow stunt virus (RYSV).